The sequence spans 440 residues: Ribulose bisphosphate carboxylase large chain (440 aa).

At Lys-4 the chain carries N6,N6,N6-trimethyllysine. Positions 113 and 163 each coordinate substrate. Residue Lys-165 is the Proton acceptor of the active site. Lys-167 lines the substrate pocket. Mg(2+) contacts are provided by Lys-191, Asp-193, and Glu-194. Residue Lys-191 is modified to N6-carboxylysine. Catalysis depends on His-284, which acts as the Proton acceptor. Substrate is bound by residues Arg-285, His-317, and Ser-369.

The protein belongs to the RuBisCO large chain family. Type I subfamily. Heterohexadecamer of 8 large chains and 8 small chains; disulfide-linked. The disulfide link is formed within the large subunit homodimers. It depends on Mg(2+) as a cofactor. The disulfide bond which can form in the large chain dimeric partners within the hexadecamer appears to be associated with oxidative stress and protein turnover.

Its subcellular location is the plastid. The protein localises to the chloroplast. The catalysed reaction is 2 (2R)-3-phosphoglycerate + 2 H(+) = D-ribulose 1,5-bisphosphate + CO2 + H2O. It carries out the reaction D-ribulose 1,5-bisphosphate + O2 = 2-phosphoglycolate + (2R)-3-phosphoglycerate + 2 H(+). Its function is as follows. RuBisCO catalyzes two reactions: the carboxylation of D-ribulose 1,5-bisphosphate, the primary event in carbon dioxide fixation, as well as the oxidative fragmentation of the pentose substrate in the photorespiration process. Both reactions occur simultaneously and in competition at the same active site. The polypeptide is Ribulose bisphosphate carboxylase large chain (Dicksonia antarctica (Australian tree fern)).